We begin with the raw amino-acid sequence, 508 residues long: 25-hydroxyvitamin D-1 alpha hydroxylase, mitochondrial (508 aa).

Cys455 is a heme binding site.

It belongs to the cytochrome P450 family. Heme serves as cofactor. Kidney.

It is found in the mitochondrion membrane. The enzyme catalyses calcidiol + 2 reduced [adrenodoxin] + O2 + 2 H(+) = calcitriol + 2 oxidized [adrenodoxin] + H2O. It catalyses the reaction secalciferol + 2 reduced [adrenodoxin] + O2 + 2 H(+) = calcitetrol + 2 oxidized [adrenodoxin] + H2O. It carries out the reaction 25-hydroxy-24-oxocalciol + 2 reduced [adrenodoxin] + O2 + 2 H(+) = (1S)-1,25-dihydroxy-24-oxocalciol + 2 oxidized [adrenodoxin] + H2O. The catalysed reaction is 25-hydroxyvitamin D2 + 2 reduced [adrenodoxin] + O2 + 2 H(+) = 1alpha,25-dihydroxyvitamin D2 + 2 oxidized [adrenodoxin] + H2O. The protein operates within hormone biosynthesis; vitamin D biosynthesis. With respect to regulation, activated by cardiolipin and dioleoyl phosphatidylethanolamine (DOPE), phospholipids found in the inner mitochondrial membrane. Inhibited by high substrate concentration. In terms of biological role, a cytochrome P450 monooxygenase involved in vitamin D metabolism and in calcium and phosphorus homeostasis. Catalyzes the rate-limiting step in the activation of vitamin D in the kidney, namely the hydroxylation of 25-hydroxyvitamin D3/calcidiol at the C1alpha-position to form the hormonally active form of vitamin D3, 1alpha,25-dihydroxyvitamin D3/calcitriol that acts via the vitamin D receptor (VDR). Has 1alpha-hydroxylase activity on vitamin D intermediates of the CYP24A1-mediated inactivation pathway. Converts 24R,25-dihydroxyvitamin D3/secalciferol to 1-alpha,24,25-trihydroxyvitamin D3, an active ligand of VDR. Also active on 25-hydroxyvitamin D2. Mechanistically, uses molecular oxygen inserting one oxygen atom into a substrate, and reducing the second into a water molecule, with two electrons provided by NADPH via FDXR/adrenodoxin reductase and FDX1/adrenodoxin. The protein is 25-hydroxyvitamin D-1 alpha hydroxylase, mitochondrial (CYP27B1) of Homo sapiens (Human).